The following is a 362-amino-acid chain: Histidine protein methyltransferase 1 homolog (362 aa).

The tract at residues 18–88 (TSLDDGTCVL…EACKHQPSWK (71 aa)) is disordered. Positions 30 to 51 (QKGKQDKRQSTERPGLPRDHSW) are enriched in basic and acidic residues. Polar residues predominate over residues 52-65 (KCSSLGNAASSEDT). Phosphoserine is present on residues Ser-62 and Ser-67. A compositionally biased stretch (basic and acidic residues) spans 73–82 (DRSDDPEACK). Tele-methylhistidine is present on His-144. S-adenosyl-L-methionine-binding positions include 158-162 (IWECT), Gly-185, and 206-208 (QDY). The Nuclear localization signal motif lies at 237 to 243 (PDGKRQR). Residues 259 to 261 (GEW) and Ser-283 each bind S-adenosyl-L-methionine.

Belongs to the methyltransferase superfamily. METTL18 family. As to quaternary structure, interacts with GRWD1 and members of the heat shock protein 90 and 70 families; these proteins may possibly be methylation substrates for the enzyme. Monomethylated at His-144 through automethylation. Automethylation at His-144 positively regulates the methyltransferase activity toward RPL3. Probably methylated on other residues.

It is found in the cytoplasm. The protein localises to the cytosol. Its subcellular location is the nucleus. It localises to the nucleolus. The catalysed reaction is L-histidyl-[protein] + S-adenosyl-L-methionine = N(tele)-methyl-L-histidyl-[protein] + S-adenosyl-L-homocysteine + H(+). Protein-L-histidine N-tele-methyltransferase that specifically monomethylates RPL3, thereby regulating translation elongation. Histidine methylation of RPL3 regulates translation elongation by slowing ribosome traversal on tyrosine codons: slower elongation provides enough time for proper folding of synthesized proteins and prevents cellular aggregation of tyrosine-rich proteins. The protein is Histidine protein methyltransferase 1 homolog of Mus musculus (Mouse).